The chain runs to 528 residues: Peptide chain release factor 3 (528 aa).

Residues 10–278 (DRRRTFGIIS…AFVQMAPPPH (269 aa)) form the tr-type G domain. GTP-binding positions include 19–26 (SHPDAGKT), 87–91 (DTPGH), and 141–144 (NKLD).

It belongs to the TRAFAC class translation factor GTPase superfamily. Classic translation factor GTPase family. PrfC subfamily.

It localises to the cytoplasm. Its function is as follows. Increases the formation of ribosomal termination complexes and stimulates activities of RF-1 and RF-2. It binds guanine nucleotides and has strong preference for UGA stop codons. It may interact directly with the ribosome. The stimulation of RF-1 and RF-2 is significantly reduced by GTP and GDP, but not by GMP. The protein is Peptide chain release factor 3 of Syntrophobacter fumaroxidans (strain DSM 10017 / MPOB).